The chain runs to 247 residues: UPF0246 protein LAF_1150 (247 aa).

It belongs to the UPF0246 family.

This chain is UPF0246 protein LAF_1150, found in Limosilactobacillus fermentum (strain NBRC 3956 / LMG 18251) (Lactobacillus fermentum).